The chain runs to 225 residues: Protein ZW2 (225 aa).

Residues 7-225 form the DOG1 domain; the sequence is SETFASFFND…FYLRLRDLGV (219 aa).

Functionally, may be involved in the regulation of abscisic acid (ABA) sensitivity. This chain is Protein ZW2, found in Arabidopsis thaliana (Mouse-ear cress).